The following is a 261-amino-acid chain: tRNA (guanine-N(7)-)-methyltransferase (261 aa).

Glu-75, Glu-100, Asp-127, and Asp-150 together coordinate S-adenosyl-L-methionine. Asp-150 is an active-site residue. Lys-154 contributes to the substrate binding site. The tract at residues Arg-156–Arg-161 is interaction with RNA. Substrate is bound by residues Asp-186 and Thr-223–Glu-226.

This sequence belongs to the class I-like SAM-binding methyltransferase superfamily. TrmB family.

It catalyses the reaction guanosine(46) in tRNA + S-adenosyl-L-methionine = N(7)-methylguanosine(46) in tRNA + S-adenosyl-L-homocysteine. It functions in the pathway tRNA modification; N(7)-methylguanine-tRNA biosynthesis. Catalyzes the formation of N(7)-methylguanine at position 46 (m7G46) in tRNA. The sequence is that of tRNA (guanine-N(7)-)-methyltransferase from Xanthomonas campestris pv. campestris (strain 8004).